A 123-amino-acid polypeptide reads, in one-letter code: UPF0738 protein BcerKBAB4_1107 (123 aa).

This sequence belongs to the UPF0738 family.

This is UPF0738 protein BcerKBAB4_1107 from Bacillus mycoides (strain KBAB4) (Bacillus weihenstephanensis).